A 217-amino-acid polypeptide reads, in one-letter code: Transcriptional regulatory protein CutR (217 aa).

A Response regulatory domain is found at 2–116 (RVLVVEDEQL…ELIARVRALG (115 aa)). The residue at position 51 (Asp51) is a 4-aspartylphosphate. The segment at residues 124-217 (PPVLERAGIK…VTVPGSGYRI (94 aa)) is a DNA-binding region (ompR/PhoB-type).

Member of the two-component regulatory system CutS/CutR, involved in the regulation of copper metabolism. CutR suppresses a defective melC1 gene, encoding a putative copper-transfer gene, probably by altering copper metabolism. The chain is Transcriptional regulatory protein CutR (cutR) from Streptomyces lividans.